Reading from the N-terminus, the 294-residue chain is N-acetylmuramic acid 6-phosphate etherase (294 aa).

The region spanning 54-217 (VIASFRKGGR…STTSMIGVGK (164 aa)) is the SIS domain. Glutamate 82 acts as the Proton donor in catalysis. Glutamate 113 is a catalytic residue.

This sequence belongs to the GCKR-like family. MurNAc-6-P etherase subfamily. As to quaternary structure, homodimer.

The catalysed reaction is N-acetyl-D-muramate 6-phosphate + H2O = N-acetyl-D-glucosamine 6-phosphate + (R)-lactate. It participates in amino-sugar metabolism; N-acetylmuramate degradation. Functionally, specifically catalyzes the cleavage of the D-lactyl ether substituent of MurNAc 6-phosphate, producing GlcNAc 6-phosphate and D-lactate. The sequence is that of N-acetylmuramic acid 6-phosphate etherase from Exiguobacterium sp. (strain ATCC BAA-1283 / AT1b).